Reading from the N-terminus, the 242-residue chain is 1-(5-phosphoribosyl)-5-[(5-phosphoribosylamino)methylideneamino] imidazole-4-carboxamide isomerase (242 aa).

Asp8 (proton acceptor) is an active-site residue. Asp130 acts as the Proton donor in catalysis.

The protein belongs to the HisA/HisF family.

It is found in the cytoplasm. The catalysed reaction is 1-(5-phospho-beta-D-ribosyl)-5-[(5-phospho-beta-D-ribosylamino)methylideneamino]imidazole-4-carboxamide = 5-[(5-phospho-1-deoxy-D-ribulos-1-ylimino)methylamino]-1-(5-phospho-beta-D-ribosyl)imidazole-4-carboxamide. Its pathway is amino-acid biosynthesis; L-histidine biosynthesis; L-histidine from 5-phospho-alpha-D-ribose 1-diphosphate: step 4/9. The sequence is that of 1-(5-phosphoribosyl)-5-[(5-phosphoribosylamino)methylideneamino] imidazole-4-carboxamide isomerase from Acidithiobacillus ferrooxidans (strain ATCC 53993 / BNL-5-31) (Leptospirillum ferrooxidans (ATCC 53993)).